A 149-amino-acid polypeptide reads, in one-letter code: Deoxyuridine 5'-triphosphate nucleotidohydrolase (149 aa).

Substrate-binding positions include 68 to 70, Asn-81, 85 to 87, and Met-95; these read RSG and LID.

This sequence belongs to the dUTPase family. Mg(2+) serves as cofactor.

The catalysed reaction is dUTP + H2O = dUMP + diphosphate + H(+). It functions in the pathway pyrimidine metabolism; dUMP biosynthesis; dUMP from dCTP (dUTP route): step 2/2. Functionally, this enzyme is involved in nucleotide metabolism: it produces dUMP, the immediate precursor of thymidine nucleotides and it decreases the intracellular concentration of dUTP so that uracil cannot be incorporated into DNA. This is Deoxyuridine 5'-triphosphate nucleotidohydrolase from Polynucleobacter asymbioticus (strain DSM 18221 / CIP 109841 / QLW-P1DMWA-1) (Polynucleobacter necessarius subsp. asymbioticus).